The sequence spans 338 residues: P2Y purinoceptor 14 (338 aa).

Over 1–29 (MINSTSTQPPDESCSQNLLITQQIIPVLY) the chain is Extracellular. Asn3 is a glycosylation site (N-linked (GlcNAc...) asparagine). The helical transmembrane segment at 30 to 50 (CMVFIAGILLNGVSGWIFFYV) threads the bilayer. The Cytoplasmic portion of the chain corresponds to 51 to 55 (PSSKS). A helical membrane pass occupies residues 56–76 (FIIYLKNIVIADFVMSLTFPF). Residues 77-96 (KILGDSGLGPWQLNVFVCRV) lie on the Extracellular side of the membrane. Cys94 and Cys172 are joined by a disulfide. The chain crosses the membrane as a helical span at residues 97-117 (SAVLFYVNMYVSIVFFGLISF). The Cytoplasmic segment spans residues 118-139 (DRYYKIVKPLWTSFIQSVSYSK). The helical transmembrane segment at 140-160 (LLSVIVWMLMLLLAVPNIILT) threads the bilayer. Residue Asn161 is glycosylated (N-linked (GlcNAc...) asparagine). Topologically, residues 161–188 (NQSVREVTQIKCIELKSELGRKWHKASN) are extracellular. A helical membrane pass occupies residues 189–209 (YIFVAIFWIVFLLLIVFYTAI). Over 210–234 (TKKIFKSHLKSSRNSTSVKKKSSRN) the chain is Cytoplasmic. Residues 235-255 (IFSIVFVFFVCFVPYHIARIP) traverse the membrane as a helical segment. The Extracellular segment spans residues 256–278 (YTKSQTEAHYSCQSKEILRYMKE). The chain crosses the membrane as a helical span at residues 279–299 (FTLLLSAANVCLDPIIYFFLC). At 300–338 (QPFREILCKKLHIPLKAQNDLDISRIKRGNTTLESTDTL) the chain is on the cytoplasmic side.

This sequence belongs to the G-protein coupled receptor 1 family. As to expression, highest expression in the placenta, adipose tissue, stomach and intestine, intermediate levels in the brain, spleen, lung and heart, lowest levels in the kidney.

It is found in the cell membrane. Receptor for UDP-glucose and other UDP-sugar coupled to G-proteins. Not activated by ATP, ADP, UTP or ATP. In Homo sapiens (Human), this protein is P2Y purinoceptor 14 (P2RY14).